A 350-amino-acid chain; its full sequence is Ornithine carbamoyltransferase, mitochondrial (350 aa).

The transit peptide at 1-30 (MLHHMRTIINASWRYGNKCIVRQFGFSQTY) directs the protein to the mitochondrion. Carbamoyl phosphate-binding positions include 86 to 90 (STRTR), Arg-137, and His-164. Residue Arg-137 participates in L-ornithine binding. L-ornithine-binding positions include Asn-195, 259–263 (DTWVS), 298–301 (HCLP), and Arg-326. Residue Cys-299 is part of the active site. Arg-326 contacts carbamoyl phosphate.

The protein belongs to the aspartate/ornithine carbamoyltransferase superfamily. OTCase family. In terms of assembly, homotrimer. Liver.

It localises to the mitochondrion matrix. The catalysed reaction is carbamoyl phosphate + L-ornithine = L-citrulline + phosphate + H(+). It participates in nitrogen metabolism; urea cycle; L-citrulline from L-ornithine and carbamoyl phosphate: step 1/1. Functionally, OTC is necessary for the tadpoles transition from an ammonotelic, aquatic larva to a ureotelic, terrestrial adult. This Aquarana catesbeiana (American bullfrog) protein is Ornithine carbamoyltransferase, mitochondrial.